We begin with the raw amino-acid sequence, 209 residues long: Large ribosomal subunit protein uL3 (209 aa).

The disordered stretch occupies residues 122-151; that stretch reads AIKRHGQSRGPMSHGSRYHRRPGSMGPVDP.

The protein belongs to the universal ribosomal protein uL3 family. Part of the 50S ribosomal subunit. Forms a cluster with proteins L14 and L19.

In terms of biological role, one of the primary rRNA binding proteins, it binds directly near the 3'-end of the 23S rRNA, where it nucleates assembly of the 50S subunit. This chain is Large ribosomal subunit protein uL3, found in Bacillus velezensis (strain DSM 23117 / BGSC 10A6 / LMG 26770 / FZB42) (Bacillus amyloliquefaciens subsp. plantarum).